Here is a 63-residue protein sequence, read N- to C-terminus: Large ribosomal subunit protein uL30 (63 aa).

This sequence belongs to the universal ribosomal protein uL30 family. Part of the 50S ribosomal subunit.

In Granulibacter bethesdensis (strain ATCC BAA-1260 / CGDNIH1), this protein is Large ribosomal subunit protein uL30.